The sequence spans 164 residues: MTEPSAATTSLVSDFNIKKILELLPHRYPMLLVDRVLEMEPRKRIKAIKNVTFNEPFFNGHFPGHPVMPGVLMLEALAQTAALLTFGESNHKRQENQLYLFVSIDGARFKRQVTPGDQLVLNAELLRSKSGMWKFKVFATVDDEVAAEAEIMCAVREDKSKGDA.

Residue H61 is part of the active site.

It belongs to the thioester dehydratase family. FabZ subfamily.

It is found in the cytoplasm. The catalysed reaction is a (3R)-hydroxyacyl-[ACP] = a (2E)-enoyl-[ACP] + H2O. Its function is as follows. Involved in unsaturated fatty acids biosynthesis. Catalyzes the dehydration of short chain beta-hydroxyacyl-ACPs and long chain saturated and unsaturated beta-hydroxyacyl-ACPs. The sequence is that of 3-hydroxyacyl-[acyl-carrier-protein] dehydratase FabZ from Ralstonia nicotianae (strain ATCC BAA-1114 / GMI1000) (Ralstonia solanacearum).